Here is a 159-residue protein sequence, read N- to C-terminus: Putative pre-16S rRNA nuclease (159 aa).

This sequence belongs to the YqgF nuclease family.

It is found in the cytoplasm. Its function is as follows. Could be a nuclease involved in processing of the 5'-end of pre-16S rRNA. The chain is Putative pre-16S rRNA nuclease from Bartonella henselae (strain ATCC 49882 / DSM 28221 / CCUG 30454 / Houston 1) (Rochalimaea henselae).